Reading from the N-terminus, the 428-residue chain is Histidinol dehydrogenase homolog (428 aa).

Positions 250 and 253 each coordinate Zn(2+). Catalysis depends on proton acceptor residues E320 and H321. 2 residues coordinate Zn(2+): D354 and H413.

It belongs to the histidinol dehydrogenase family. Zn(2+) serves as cofactor.

This chain is Histidinol dehydrogenase homolog, found in Pelagibacter ubique (strain HTCC1062).